The chain runs to 311 residues: MKIAVLGAAGGIGQALALLLKLQLPAGSELSLYDIAPVTPGVAADVSHIPTAVKIQGFAGEDPTPALENADVVLISAGVARKPGMDRSDLFNINAGIVKNLIEKVAKTCPKACVGIITNPVNTTVAIAAEVLKKAGVYDKRKLFGVTTLDVLRSETFVAELKGLNVSRIAVPVIGGHSGVTILPLLSQVQYAEWEEDEIAPLTKRIQNAGTEVVEAKAGGGSATLSMAQAAARFALSLVQGLSGETVVECTYVEGDGKYARFFAQPVRLGKEGVEEILPVGTLSAFEQKALEDMLPTLRADIELGEKFVNN.

NAD(+)-binding positions include 7 to 13 and aspartate 34; that span reads GAAGGIG. Substrate contacts are provided by arginine 81 and arginine 87. NAD(+)-binding positions include asparagine 94 and 117-119; that span reads ITN. Substrate contacts are provided by asparagine 119 and arginine 153. The active-site Proton acceptor is histidine 177. Methionine 227 lines the NAD(+) pocket.

This sequence belongs to the LDH/MDH superfamily. MDH type 1 family. As to quaternary structure, homodimer.

The enzyme catalyses (S)-malate + NAD(+) = oxaloacetate + NADH + H(+). In terms of biological role, catalyzes the reversible oxidation of malate to oxaloacetate. The chain is Malate dehydrogenase from Histophilus somni (strain 129Pt) (Haemophilus somnus).